The primary structure comprises 361 residues: 3-dehydroquinate synthase (361 aa).

NAD(+)-binding positions include 104–108 (GVIGD), 128–129 (TT), Lys140, and Lys149. Zn(2+) is bound by residues Glu182, His245, and His262.

It belongs to the sugar phosphate cyclases superfamily. Dehydroquinate synthase family. NAD(+) is required as a cofactor. Requires Co(2+) as cofactor. It depends on Zn(2+) as a cofactor.

The protein localises to the cytoplasm. The catalysed reaction is 7-phospho-2-dehydro-3-deoxy-D-arabino-heptonate = 3-dehydroquinate + phosphate. Its pathway is metabolic intermediate biosynthesis; chorismate biosynthesis; chorismate from D-erythrose 4-phosphate and phosphoenolpyruvate: step 2/7. Catalyzes the conversion of 3-deoxy-D-arabino-heptulosonate 7-phosphate (DAHP) to dehydroquinate (DHQ). In Halalkalibacterium halodurans (strain ATCC BAA-125 / DSM 18197 / FERM 7344 / JCM 9153 / C-125) (Bacillus halodurans), this protein is 3-dehydroquinate synthase.